We begin with the raw amino-acid sequence, 353 residues long: Trans-enoyl reductase eqxC (353 aa).

V45–K48 is a binding site for NADP(+). I131–L138 lines the substrate pocket. NADP(+)-binding positions include S166–T169, S189–N192, Y207, and L254–E255. Position 275-279 (G275–L279) interacts with substrate. I344 to S345 lines the NADP(+) pocket.

Belongs to the zinc-containing alcohol dehydrogenase family. As to quaternary structure, monomer.

It catalyses the reaction L-serine + 7 malonyl-CoA + acetyl-CoA + 2 S-adenosyl-L-methionine + ATP + 8 NADPH + 11 H(+) = (5S)-3-[(2E,6R,8E,10E,12E)-2,6-dimethyltetradeca-2,8,10,12-tetraenoyl]-5-(hydroxymethyl)pyrrolidine-2,4-dione + AMP + 2 S-adenosyl-L-homocysteine + 7 CO2 + diphosphate + 8 NADP(+) + 8 CoA + 6 H2O. The protein operates within mycotoxin biosynthesis. Functionally, trans-enoyl reductase; part of the gene cluster that mediates the biosynthesis of equisetin, a trans-fused decalin-containing tetramic acid with antimicrobial activity. The PKS module of eqxS together with the enoylreductase eqxC catalyze the formation of the polyketide unit which is then conjugated to L-serine by the condensation domain of the eqxS NRPS module. Activity of the Dieckmann cyclase domain (RED) results in release of the Dieckmann product intermediate. Diels-Alderase eqx3 is involved in endo-selective Diels-Alder cycloaddition to form the decalin ring, leading to the production of N-desmethylequisetin also called trichosetin. Subsequent N-methylation is carried out by eqxD to give equisetin. This chain is Trans-enoyl reductase eqxC, found in Fusarium heterosporum.